Consider the following 329-residue polypeptide: 3'-5' exonuclease (329 aa).

Residues 26–88 (EEKPKPKKVV…MADVGTPSPE (63 aa)) form a disordered region. Residues 46–65 (KNLDTPEIVNKENAEVENPP) are compositionally biased toward basic and acidic residues. Phosphoserine occurs at positions 78 and 86. Positions 130 to 288 (TEIVPMAFDM…IGQVIYREIE (159 aa)) constitute a 3'-5' exonuclease domain. Mg(2+) contacts are provided by Asp-138, Glu-140, and Asp-276.

Belongs to the WRNexo family.

Its subcellular location is the nucleus. Functionally, has exonuclease activity on both single-stranded and duplex templates bearing overhangs, but not blunt ended duplex DNA, and cleaves in a 3'-5' direction. Essential for the formation of DNA replication focal centers. Has an important role in maintaining genome stability. This is 3'-5' exonuclease from Drosophila mojavensis (Fruit fly).